Reading from the N-terminus, the 262-residue chain is Acyl-[acyl-carrier-protein]--UDP-N-acetylglucosamine O-acyltransferase (262 aa).

It belongs to the transferase hexapeptide repeat family. LpxA subfamily. In terms of assembly, homotrimer.

It localises to the cytoplasm. The enzyme catalyses a (3R)-hydroxyacyl-[ACP] + UDP-N-acetyl-alpha-D-glucosamine = a UDP-3-O-[(3R)-3-hydroxyacyl]-N-acetyl-alpha-D-glucosamine + holo-[ACP]. Its pathway is glycolipid biosynthesis; lipid IV(A) biosynthesis; lipid IV(A) from (3R)-3-hydroxytetradecanoyl-[acyl-carrier-protein] and UDP-N-acetyl-alpha-D-glucosamine: step 1/6. Involved in the biosynthesis of lipid A, a phosphorylated glycolipid that anchors the lipopolysaccharide to the outer membrane of the cell. The protein is Acyl-[acyl-carrier-protein]--UDP-N-acetylglucosamine O-acyltransferase of Paraburkholderia xenovorans (strain LB400).